Reading from the N-terminus, the 705-residue chain is Probable glutamate carboxypeptidase AMP1 (705 aa).

The Cytoplasmic portion of the chain corresponds to 1-24; the sequence is MSQPLTTRPTVTGISIIPFRQPPP. Residues 25-42 traverse the membrane as a helical; Signal-anchor for type II membrane protein segment; it reads LCSFLFVIVLFVATFYTL. The Extracellular portion of the chain corresponds to 43-705; it reads HHPDAVTPPL…ASKALKGGFT (663 aa). N74, N137, and N322 each carry an N-linked (GlcNAc...) asparagine glycan. Positions 255–548 are catalytic; the sequence is GVVGGEKLSL…GIWGLLGILL (294 aa). Zn(2+) contacts are provided by H356 and D366. E403 serves as the catalytic Nucleophile. The Zn(2+) site is built by E404, D432, and H514. A glycan (N-linked (GlcNAc...) asparagine) is linked at N676.

Belongs to the peptidase M28 family. M28B subfamily. Zn(2+) serves as cofactor. As to expression, expressed in all plant parts. Highest levels in the bolt stem, inflorescence, root and silique. Low level in leaves.

The protein localises to the endoplasmic reticulum membrane. The enzyme catalyses Release of an unsubstituted, C-terminal glutamyl residue, typically from Ac-Asp-Glu or folylpoly-gamma-glutamates.. Its function is as follows. May modulate the level of one or more small signaling molecules that have a role in regulating meristem function. May play a role in balancing and restricting the meristem-promoting activity of auxin signaling. Involved in ethylene and giberellin (GA) signaling pathways or in a parallel pathway controlling cell and hypocotyl elongation and cellular organization. Involved in abscisic acid (ABA) signaling pathway. Plays a negative role in ABA-mediated seed germination and seedling development. Acts in association with LAMP1 to suppress ectopic stem cell niche formation in the shoot apical meristem (SAM) independently of cytokinin signaling pathway. Modulates responses to ABA, oxidative stress and abotic stress. Acts as a negative regulator of the ABA signaling pathway to modulate freezing and drought stress responses. Mediates carbon and amino acid metabolism. May be involved in the acquisition and/or maintenance of seed dormancy. Involved in the regulation of response to heat shock and plant defense. The protein is Probable glutamate carboxypeptidase AMP1 of Arabidopsis thaliana (Mouse-ear cress).